The chain runs to 502 residues: MFS-type transporeter aprT (502 aa).

A disordered region spans residues 1–38; that stretch reads MASPELASHHSDPSDGEGAPFLPGVDDESPESLNSDIP. The next 11 helical transmembrane spans lie at 45-65, 114-136, 150-170, 175-195, 214-234, 239-259, 302-322, 336-356, 380-400, 403-423, and 464-484; these read HGLI…GPMI, IGYR…GLLA, VGFV…NIFP, WFGA…ALFW, FGIA…FVMK, VPLM…NLLP, VAVI…AFLV, ATLL…FILP, VMLL…NTLI, LLLH…ITGL, and LWIG…ALVL. N-linked (GlcNAc...) asparagine glycosylation is present at asparagine 495.

This sequence belongs to the major facilitator superfamily.

The protein localises to the cell membrane. In terms of biological role, MFS-rype transporer; part of the gene cluster that mediates the biosynthesis of the asperipin-2a, a bicyclic peptide that possesses two macrocyclic ether rings consisting of 14- and 17-membered paracyclophans. AprT is likely to be involved in the cellular export of asperipin-2a. This Aspergillus flavus (strain ATCC 200026 / FGSC A1120 / IAM 13836 / NRRL 3357 / JCM 12722 / SRRC 167) protein is MFS-type transporeter aprT.